A 173-amino-acid chain; its full sequence is dCTP deaminase, dUMP-forming (173 aa).

DCTP is bound by residues 93 to 98 (RSSTGR), aspartate 111, 119 to 121 (TLE), glutamine 138, and tyrosine 151. The active-site Proton donor/acceptor is glutamate 121.

This sequence belongs to the dCTP deaminase family. Homotrimer.

The enzyme catalyses dCTP + 2 H2O = dUMP + NH4(+) + diphosphate. The protein operates within pyrimidine metabolism; dUMP biosynthesis; dUMP from dCTP: step 1/1. Its function is as follows. Bifunctional enzyme that catalyzes both the deamination of dCTP to dUTP and the hydrolysis of dUTP to dUMP without releasing the toxic dUTP intermediate. The protein is dCTP deaminase, dUMP-forming of Clostridium beijerinckii (strain ATCC 51743 / NCIMB 8052) (Clostridium acetobutylicum).